Here is a 302-residue protein sequence, read N- to C-terminus: Surfeit locus protein 4 homolog (302 aa).

A run of 6 helical transmembrane segments spans residues 95-115 (APLL…LVVF), 120-140 (AYAI…YGLI), 193-213 (VLLI…ISWT), 215-235 (ILVH…FKAK), 236-256 (FFAA…NSFW), and 271-291 (DFFQ…TGPG). The short motif at 299–302 (KKIY) is the Di-lysine motif element.

This sequence belongs to the SURF4 family.

The protein resides in the endoplasmic reticulum membrane. The polypeptide is Surfeit locus protein 4 homolog (Schizosaccharomyces pombe (strain 972 / ATCC 24843) (Fission yeast)).